A 152-amino-acid polypeptide reads, in one-letter code: KTNKIVITNDKGRLSKEEIERMLAEAEKYKAEDEAEAARISAKNALESYAYSLRNTLSDSKVDEKLDAGDKQKLTAEIDKTVQWLDDNQTATKDEYESQQKELEGVANPIMMKFYGAGGEGGMPGGMPGGGMPGGAPGGAAGDDGPTVEEVD.

A compositionally biased stretch (gly residues) spans 121–142 (GGMPGGMPGGGMPGGAPGGAAG). Residues 121-152 (GGMPGGMPGGGMPGGAPGGAAGDDGPTVEEVD) are disordered.

This sequence belongs to the heat shock protein 70 family.

This is Heat shock 70 kDa protein (HSP70) from Alternaria alternata (Alternaria rot fungus).